Consider the following 75-residue polypeptide: uncharacterized protein (75 aa).

A signal peptide spans 1-19; that stretch reads MKKTAAIISACMLTFALSA. Cys20 is lipidated: N-palmitoyl cysteine. Cys20 carries S-diacylglycerol cysteine lipidation.

It to E.coli YgdR.

The protein resides in the cell membrane. This is an uncharacterized protein from Escherichia coli O6:H1 (strain CFT073 / ATCC 700928 / UPEC).